Consider the following 353-residue polypeptide: tRNA N(3)-cytidine methyltransferase METTL2 (353 aa).

The disordered stretch occupies residues Met-1 to Gly-37. Trp-93, Tyr-97, Gly-165, Asp-190, Asp-216, and Ile-237 together coordinate S-adenosyl-L-methionine.

It belongs to the methyltransferase superfamily. METL family. As to quaternary structure, monomer.

Its subcellular location is the cytoplasm. It catalyses the reaction cytidine(32) in tRNA(Thr) + S-adenosyl-L-methionine = N(3)-methylcytidine(32) in tRNA(Thr) + S-adenosyl-L-homocysteine + H(+). The catalysed reaction is cytidine(32) in tRNA(Arg)(CCU) + S-adenosyl-L-methionine = N(3)-methylcytidine(32) in tRNA(Arg)(CCU) + S-adenosyl-L-homocysteine + H(+). Functionally, S-adenosyl-L-methionine-dependent methyltransferase that mediates N(3)-methylcytidine modification of residue 32 of the tRNA anticodon loop of tRNA(Thr)(UGU) and tRNA(Arg)(CCU). N(3)-methylcytidine methylation by mettl2a requires the N6-threonylcarbamoylation of tRNA (t6A37) by the EKC/KEOPS complex as prerequisite. This is tRNA N(3)-cytidine methyltransferase METTL2 (mettl2a) from Danio rerio (Zebrafish).